We begin with the raw amino-acid sequence, 397 residues long: Homoserine O-acetyltransferase (397 aa).

The AB hydrolase-1 domain occupies 58–368 (NAVLVLHALT…EAKWGHDAFL (311 aa)). Serine 164 (nucleophile) is an active-site residue. Substrate is bound at residue arginine 233. Active-site residues include aspartate 331 and histidine 364. Residue aspartate 365 participates in substrate binding.

The protein belongs to the AB hydrolase superfamily. MetX family. Homodimer.

The protein localises to the cytoplasm. The enzyme catalyses L-homoserine + acetyl-CoA = O-acetyl-L-homoserine + CoA. The protein operates within amino-acid biosynthesis; L-methionine biosynthesis via de novo pathway; O-acetyl-L-homoserine from L-homoserine: step 1/1. Its function is as follows. Transfers an acetyl group from acetyl-CoA to L-homoserine, forming acetyl-L-homoserine. The chain is Homoserine O-acetyltransferase from Solidesulfovibrio magneticus (strain ATCC 700980 / DSM 13731 / RS-1) (Desulfovibrio magneticus).